Here is a 1241-residue protein sequence, read N- to C-terminus: Putative urea carboxylase (1241 aa).

The Biotin carboxylation domain occupies 3-459; that stretch reads ALKTLLIANR…LTKFLNNFEY (457 aa). 2 residues coordinate ATP: lysine 117 and glutamate 201. An ATP-grasp domain is found at 121–321; it reads RELATKAGVP…LVELMLRQAD (201 aa). Positions 1159-1239 constitute a Biotinyl-binding domain; that stretch reads EELLKDPEIT…EAGKPLMLVR (81 aa). N6-biotinyllysine is present on lysine 1202.

Requires biotin as cofactor.

It carries out the reaction urea + hydrogencarbonate + ATP = urea-1-carboxylate + ADP + phosphate + H(+). Its function is as follows. Involved in the utilization of lactams. Required for the conversion of exogenous 2-pyrrolidinone (gamma-butyrolactam) to endogenous gamma-amino-n-butyrate (GABA). The chain is Putative urea carboxylase (lamA) from Emericella nidulans (strain FGSC A4 / ATCC 38163 / CBS 112.46 / NRRL 194 / M139) (Aspergillus nidulans).